Reading from the N-terminus, the 1404-residue chain is Probable GPI-anchored adhesin-like protein PGA55 (1404 aa).

The signal sequence occupies residues 1-19; the sequence is MVLLCKYKVSWVFVLSVAG. Tandem repeats lie at residues 104 to 109, 136 to 141, 156 to 161, 162 to 167, 183 to 188, 196 to 201, 203 to 208, 209 to 214, 216 to 221, 222 to 227, 228 to 233, 234 to 239, 247 to 252, 253 to 258, 261 to 266, 267 to 272, 274 to 279, 280 to 285, 286 to 291, 292 to 297, 298 to 303, 304 to 309, 317 to 322, 324 to 329, 330 to 335, 336 to 341, 343 to 348, 349 to 354, 355 to 360, 361 to 366, 374 to 379, 380 to 385, 388 to 393, 394 to 399, 401 to 406, 407 to 412, 413 to 418, 419 to 424, 425 to 430, 431 to 436, 444 to 449, 450 to 455, 457 to 462, 463 to 468, 469 to 474, 475 to 480, 488 to 493, 494 to 500, 502 to 507, 508 to 513, 515 to 520, 521 to 526, 527 to 532, 533 to 538, 546 to 551, 552 to 557, 560 to 565, 566 to 571, 573 to 578, 579 to 584, 585 to 590, 591 to 596, 604 to 609, 611 to 616, 617 to 622, 623 to 628, 629 to 634, 635 to 640, 641 to 646, 654 to 659, 660 to 665, 668 to 673, 674 to 679, 681 to 686, 687 to 692, 693 to 698, 699 to 704, 712 to 717, 719 to 724, 725 to 730, 731 to 736, 737 to 742, 743 to 748, 749 to 754, 771 to 776, 777 to 782, and 797 to 802. Residues 104–541 form an 88 X 6 AA approximate tandem repeats region; that stretch reads VSSSSSEVIS…EVSSSSQVTS (438 aa). Residues 113–833 are disordered; it reads SSSSEEASSS…VSSSSASSEV (721 aa). N817 is a glycosylation site (N-linked (GlcNAc...) asparagine). A 1-88 repeat occupies 824-829; the sequence is VSSSSA. Residues N994 and N1074 are each glycosylated (N-linked (GlcNAc...) asparagine). N1382 carries the GPI-anchor amidated asparagine lipid modification. Residues 1383-1404 constitute a propeptide, removed in mature form; sequence AASRQSFNYKFIVGLILAYIIA.

Its subcellular location is the cell membrane. Its function is as follows. Predicted GPI-anchored adhesin-like protein which may be involved in filamentous growth and chlamydospore formation. This chain is Probable GPI-anchored adhesin-like protein PGA55 (PGA55), found in Candida albicans (strain SC5314 / ATCC MYA-2876) (Yeast).